The primary structure comprises 636 residues: Leucine-rich repeat and fibronectin type-III domain-containing protein 4 (636 aa).

A signal peptide spans 1 to 16 (MAPPLLLLLLASGAAA). In terms of domain architecture, LRRNT spans 17-48 (CPLPCVCQNLSESLSTLCAHRGLLFVPPNVDR). Over 17 to 518 (CPLPCVCQNL…LQAHVLGGTL (502 aa)) the chain is Extracellular. Residues N25 and N70 are each glycosylated (N-linked (GlcNAc...) asparagine). LRR repeat units follow at residues 49–70 (RTVE…DFRN), 73–94 (GLVD…SFGD), 97–118 (SLRS…SLRG), 121–142 (NLQH…AFDD), 146–169 (SLED…GSMP), 170–191 (ALHT…VFAQ), and 194–215 (QLSR…PLFS). Residues 234 to 280 (NPLHCNCELLWLRRLARPDDLETCASPPTLAGRYFWAVPEGEFSCEP) form the LRRCT domain. One can recognise an Ig-like domain in the interval 281–367 (PLIARHTQRL…GEATARVELR (87 aa)). The cysteines at positions 302 and 351 are disulfide-linked. N324, N333, N376, and N440 each carry an N-linked (GlcNAc...) asparagine glycan. The Fibronectin type-III domain occupies 405–502 (SEPAVQVTEV…GCAHFSTLPA (98 aa)). Residues 519 to 539 (TVAVGGVLVAALLVFTVALLV) form a helical membrane-spanning segment. At 540 to 636 (RGRGAGNGRL…SAERLEESVV (97 aa)) the chain is on the cytoplasmic side. The tract at residues 556–585 (VQSQTNGGTSPMPKSHPPRSPPPRPQRSCS) is disordered. Pro residues predominate over residues 569–580 (KSHPPRSPPPRP). A phosphoserine mark is found at S585 and S627. Residues 633-636 (ESVV) carry the PDZ-binding motif.

The protein belongs to the LRFN family. In terms of assembly, can form heteromeric complexes with LRFN1, LRFN2, LRFN3 and LRFN5. Unable to form homophilic interactions across cell junctions. Interacts with DLG1, DLG2 and DLG3. Also interacts with DLG4. Post-translationally, glycosylated. As to expression, expressed in brain and testis. In the brain, weak, but broad expression in the cerebral cortex and diencephalic nuclei. Also detected in other parts of the central nervous system, including the olfactory bulb, pons, cerebellum, and medulla oblongata, as well as in the peripheral nervous system, such as the ganglia of cranial nerves and the dorsal root ganglion during gestation.

It localises to the membrane. Functionally, promotes neurite outgrowth in hippocampal neurons. May play a role in redistributing DLG4 to the cell periphery. This chain is Leucine-rich repeat and fibronectin type-III domain-containing protein 4 (Lrfn4), found in Mus musculus (Mouse).